A 105-amino-acid polypeptide reads, in one-letter code: Flagellar transcriptional regulator FlhD (105 aa).

It belongs to the FlhD family. In terms of assembly, homodimer; disulfide-linked. Forms a heterohexamer composed of two FlhC and four FlhD subunits. Each FlhC binds a FlhD dimer, forming a heterotrimer, and a hexamer assembles by dimerization of two heterotrimers.

It is found in the cytoplasm. Functions in complex with FlhC as a master transcriptional regulator that regulates transcription of several flagellar and non-flagellar operons by binding to their promoter region. Activates expression of class 2 flagellar genes, including fliA, which is a flagellum-specific sigma factor that turns on the class 3 genes. Also regulates genes whose products function in a variety of physiological pathways. The protein is Flagellar transcriptional regulator FlhD of Cupriavidus pinatubonensis (strain JMP 134 / LMG 1197) (Cupriavidus necator (strain JMP 134)).